Here is a 395-residue protein sequence, read N- to C-terminus: Ankyrin repeat domain-containing protein 65 (395 aa).

10 ANK repeats span residues 52–81 (QAWGHLLQAVWKGHTGLVTQLLRQGASVEE), 85–114 (AGRTPLHLAVLRGHVSLVRLLLQRGAQVGA), 118–147 (AGRTPLHEAAWHGPSRVAELLLRRGAPANA), 151–180 (AGLTPLHWAAALGRTLMVGHLLAAPHPGPT), 185–212 (RGWTAGHWAAAGGQMAVLELLGANGGAR), 213–241 (LDSVLLVAAAAGRATALRLLLAQGAPVDA), 245–274 (VGATVLGVAAGLGRRQDMEVLLEHGADPSL), 278–307 (HGRSALHRAAAGGHLLAVQLLAAWGAEVDS), 311–340 (LGLTPLHHAARGGHIEVTGHLLDRGAEINA), and 344–373 (LHKTPLHLAMEHGHGPTAELLLSRGASPTL).

The chain is Ankyrin repeat domain-containing protein 65 (ANKRD65) from Bos taurus (Bovine).